Consider the following 127-residue polypeptide: Fluoride-specific ion channel FluC (127 aa).

A run of 4 helical transmembrane segments spans residues 4–24 (LDYLTIAFGGAIGAVLRYLVS), 39–59 (GTIIVNSVGSFFLSFLMFAAI), 68–88 (AILFFGTGLLGAFTTFSTFTY), and 102–122 (VAYALVNLLFAFTCAYFGMIL). G78 and T81 together coordinate Na(+).

Belongs to the fluoride channel Fluc/FEX (TC 1.A.43) family.

It is found in the cell inner membrane. It carries out the reaction fluoride(in) = fluoride(out). Na(+) is not transported, but it plays an essential structural role and its presence is essential for fluoride channel function. Functionally, fluoride-specific ion channel. Important for reducing fluoride concentration in the cell, thus reducing its toxicity. The chain is Fluoride-specific ion channel FluC from Thermotoga petrophila (strain ATCC BAA-488 / DSM 13995 / JCM 10881 / RKU-1).